Reading from the N-terminus, the 215-residue chain is UPF0502 protein YceH (215 aa).

Residue Lys80 is modified to N6-acetyllysine.

The protein belongs to the UPF0502 family.

The polypeptide is UPF0502 protein YceH (Escherichia coli O157:H7).